The primary structure comprises 176 residues: ADP-ribosylation factor-like protein 8d (176 aa).

GTP contacts are provided by residues 21–26 (NSGKTS), 40–43 (MIPT), 62–66 (DLGGQ), and 121–124 (NKID).

The protein belongs to the small GTPase superfamily. Arf family. As to quaternary structure, interacts with tubulin.

The protein localises to the late endosome membrane. Its subcellular location is the lysosome membrane. It localises to the cytoplasm. It is found in the cytoskeleton. The protein resides in the spindle. In terms of biological role, may play a role in lysosome motility. May play a role in chromosome segregation. The polypeptide is ADP-ribosylation factor-like protein 8d (Arabidopsis thaliana (Mouse-ear cress)).